We begin with the raw amino-acid sequence, 1407 residues long: E3 ubiquitin-protein ligase linker protein MMS1 (1407 aa).

A required for interaction with MMS22 region spans residues 1 to 600 (MLGLRTHGLD…QFQIFRHLRI (600 aa)). At Thr-1294 the chain carries Phosphothreonine.

Component of multiple cullin-RING ligases (CRLs) composed of 4 subunits: the RING protein HRT1, the cullin RTT101, a linker protein MMS1, and one of many alternative substrate receptors belonging to a protein family described as DCAF (DDB1- and CUL4-associated factor). Component of a RTT101(MMS1-MMS22) complex with the substrate receptor MMS22. This complex further interacts with RTT107 and CTF4 to form RTT101-MMS1-MMS22-RTT107 and RTT101-MMS1-MMS22-CTF4 complexes respectively. Component of a RTT101(MSS1-CRT10) complex with the substrate receptor CRT10. Component of a RTT101(MSS1-ESC2) complex with the potential substrate receptor ESC2. Component of a RTT101(MSS1-ORC5) complex with the potential substrate receptor ORC5. Interacts with RTT101 (via N-ter). Interacts (via N-ter) with MMS22 (via C-ter). Interacts with CRT10.

Its subcellular location is the nucleus. Functionally, component of multiple cullin-RING-based E3 ubiquitin-protein ligase complexes (CRLs), which mediate the ubiquitination of target proteins. The CRL associates with CDC34 as the E2 ubiquitin-conjugating enzyme. The functional specificity of the CRL depends on the type of the associated substrate receptor protein. RTT101(MMS1-MMS22) promotes fork progression through damaged DNA or natural pause sites by stabilizing replication proteins like the replication fork-pausing complex (FPC) and leading-strand polymerase at stalled replication forks. RTT101(MMS1-MMS22) ubiquitinates the acetylated histones H3K56ac-H4 at lysine residues H3K121, H3K122 and H3K125. Ubiquitination is required for efficient histone deposition during replication-coupled nucleosome assembly, probably by facilitating the transfer of H3-H4 from ASF1 to other chaperones involved in histone deposition. RTT101(MMS1-CRT10) may regulate nucleotide synthesis through transcriptional regulation of ribonucleotide reductase. RTT101(MMS1) is also involved in the non-functional rRNA decay (NRD) of 25S rRNA through the selective, ubiquitination-dependent degradation of nonfunctional ribosomal particles. Involved in the regulation of TY1 transposition. In Saccharomyces cerevisiae (strain ATCC 204508 / S288c) (Baker's yeast), this protein is E3 ubiquitin-protein ligase linker protein MMS1 (MMS1).